Reading from the N-terminus, the 151-residue chain is Gametocyte-specific factor 1-like (151 aa).

CHHC U11-48K-type zinc fingers lie at residues 6 to 33 and 40 to 67; these read IEIC…RKKN and MASC…VNRS. Positions 9, 15, 25, 29, 43, 49, 59, and 63 each coordinate Zn(2+). Residues 130–151 are disordered; sequence QESRGGDQCPEDPQTRTRKANF.

This sequence belongs to the UPF0224 (FAM112) family.

The chain is Gametocyte-specific factor 1-like (Gtsf1l) from Mus musculus (Mouse).